We begin with the raw amino-acid sequence, 289 residues long: Poly-beta-1,6-N-acetyl-D-glucosamine N-deacetylase (289 aa).

The N-terminal stretch at 1 to 30 (MKPFKLIFISALMILIMTNATPISHLNAQA) is a signal peptide. The region spanning 113–289 (RSVWINFDDM…KEWDGFDEEK (177 aa)) is the NodB homology domain.

It belongs to the polysaccharide deacetylase family.

It is found in the secreted. The protein resides in the cell wall. Its function is as follows. Catalyzes the N-deacetylation of poly-beta-1,6-N-acetyl-D-glucosamine (PNAG, also referred to as PIA), a biofilm adhesin polysaccharide. In fact, the IcaB deacetylase converts 15 to 20% of the GlcNAc residues of PNAG to glucosamine. N-deacetylation is crucial for attachment of the polysaccharide to the bacterial cell surface; it leads to the introduction of positive charges in the otherwise neutral PIA polymer, allowing electrostatic interactions. Deacetylation of the polymer is also essential for key virulence mechanisms of S.epidermidis, namely biofilm formation, colonization, and resistance to neutrophil phagocytosis and human antibacterial peptides. The sequence is that of Poly-beta-1,6-N-acetyl-D-glucosamine N-deacetylase (icaB) from Staphylococcus epidermidis (strain ATCC 35984 / DSM 28319 / BCRC 17069 / CCUG 31568 / BM 3577 / RP62A).